The sequence spans 101 residues: Iron-sulfur cluster assembly protein CyaY (101 aa).

The protein belongs to the frataxin family.

Its function is as follows. Involved in iron-sulfur (Fe-S) cluster assembly. May act as a regulator of Fe-S biogenesis. In Haemophilus influenzae (strain PittEE), this protein is Iron-sulfur cluster assembly protein CyaY.